A 457-amino-acid polypeptide reads, in one-letter code: Siroheme synthase (457 aa).

The tract at residues 1–204 (MDHLPIFCQL…NDQKAITETT (204 aa)) is precorrin-2 dehydrogenase /sirohydrochlorin ferrochelatase. NAD(+) contacts are provided by residues 22-23 (DV) and 43-44 (LA). The residue at position 128 (Ser128) is a Phosphoserine. The uroporphyrinogen-III C-methyltransferase stretch occupies residues 216-457 (GEVVLVGAGP…RDKLNWFSNH (242 aa)). Position 225 (Pro225) interacts with S-adenosyl-L-methionine. The active-site Proton acceptor is Asp248. Lys270 functions as the Proton donor in the catalytic mechanism. Residues 301 to 303 (GGD), Ile306, 331 to 332 (TA), Met382, and Gly411 each bind S-adenosyl-L-methionine.

This sequence in the N-terminal section; belongs to the precorrin-2 dehydrogenase / sirohydrochlorin ferrochelatase family. It in the C-terminal section; belongs to the precorrin methyltransferase family.

The catalysed reaction is uroporphyrinogen III + 2 S-adenosyl-L-methionine = precorrin-2 + 2 S-adenosyl-L-homocysteine + H(+). It catalyses the reaction precorrin-2 + NAD(+) = sirohydrochlorin + NADH + 2 H(+). It carries out the reaction siroheme + 2 H(+) = sirohydrochlorin + Fe(2+). It participates in cofactor biosynthesis; adenosylcobalamin biosynthesis; precorrin-2 from uroporphyrinogen III: step 1/1. It functions in the pathway cofactor biosynthesis; adenosylcobalamin biosynthesis; sirohydrochlorin from precorrin-2: step 1/1. The protein operates within porphyrin-containing compound metabolism; siroheme biosynthesis; precorrin-2 from uroporphyrinogen III: step 1/1. Its pathway is porphyrin-containing compound metabolism; siroheme biosynthesis; siroheme from sirohydrochlorin: step 1/1. It participates in porphyrin-containing compound metabolism; siroheme biosynthesis; sirohydrochlorin from precorrin-2: step 1/1. Functionally, multifunctional enzyme that catalyzes the SAM-dependent methylations of uroporphyrinogen III at position C-2 and C-7 to form precorrin-2 via precorrin-1. Then it catalyzes the NAD-dependent ring dehydrogenation of precorrin-2 to yield sirohydrochlorin. Finally, it catalyzes the ferrochelation of sirohydrochlorin to yield siroheme. The chain is Siroheme synthase from Shigella boydii serotype 18 (strain CDC 3083-94 / BS512).